Consider the following 83-residue polypeptide: Small ribosomal subunit protein eS21 (83 aa).

The protein belongs to the eukaryotic ribosomal protein eS21 family. Component of the 40S small ribosomal subunit.

It localises to the cytoplasm. It is found in the cytosol. Its subcellular location is the rough endoplasmic reticulum. In Ixodes scapularis (Black-legged tick), this protein is Small ribosomal subunit protein eS21 (RpS21).